The primary structure comprises 58 residues: Sperm protamine P1 (58 aa).

Residues 1 to 58 form a disordered region; the sequence is MARYRRRSRSRSRSRYGRRRRRSRSRRRRSRRRRRRRGRRGRGYHRRSPHRRRRRRRR.

It belongs to the protamine P1 family. As to expression, testis.

The protein resides in the nucleus. Its subcellular location is the chromosome. Its function is as follows. Protamines substitute for histones in the chromatin of sperm during the haploid phase of spermatogenesis. They compact sperm DNA into a highly condensed, stable and inactive complex. This Monodelphis domestica (Gray short-tailed opossum) protein is Sperm protamine P1 (PRM1).